An 884-amino-acid polypeptide reads, in one-letter code: Protein translocase subunit SecA (884 aa).

ATP contacts are provided by residues Gln82, 100–104 (GEGKT), and Asp491.

It belongs to the SecA family.

The protein resides in the plastid. Its subcellular location is the chloroplast stroma. It is found in the chloroplast thylakoid membrane. It catalyses the reaction ATP + H2O + cellular proteinSide 1 = ADP + phosphate + cellular proteinSide 2.. Has a central role in coupling the hydrolysis of ATP to the transfer of proteins across the thylakoid membrane. The sequence is that of Protein translocase subunit SecA from Olisthodiscus luteus (Marine phytoflagellate).